Here is a 327-residue protein sequence, read N- to C-terminus: Biotin synthase (327 aa).

Residues 49–273 (FNKDKIDLCS…ICIARIALPD (225 aa)) form the Radical SAM core domain. The [4Fe-4S] cluster site is built by Cys67, Cys71, and Cys74. Ser110, Cys142, Cys201, and Arg277 together coordinate [2Fe-2S] cluster.

This sequence belongs to the radical SAM superfamily. Biotin synthase family. Homodimer. The cofactor is [4Fe-4S] cluster. It depends on [2Fe-2S] cluster as a cofactor.

The enzyme catalyses (4R,5S)-dethiobiotin + (sulfur carrier)-SH + 2 reduced [2Fe-2S]-[ferredoxin] + 2 S-adenosyl-L-methionine = (sulfur carrier)-H + biotin + 2 5'-deoxyadenosine + 2 L-methionine + 2 oxidized [2Fe-2S]-[ferredoxin]. It participates in cofactor biosynthesis; biotin biosynthesis; biotin from 7,8-diaminononanoate: step 2/2. Its function is as follows. Catalyzes the conversion of dethiobiotin (DTB) to biotin by the insertion of a sulfur atom into dethiobiotin via a radical-based mechanism. The protein is Biotin synthase of Methanococcus maripaludis (strain C6 / ATCC BAA-1332).